The primary structure comprises 170 residues: Adenine phosphoribosyltransferase (170 aa).

The protein belongs to the purine/pyrimidine phosphoribosyltransferase family. Homodimer.

The protein resides in the cytoplasm. The catalysed reaction is AMP + diphosphate = 5-phospho-alpha-D-ribose 1-diphosphate + adenine. It participates in purine metabolism; AMP biosynthesis via salvage pathway; AMP from adenine: step 1/1. In terms of biological role, catalyzes a salvage reaction resulting in the formation of AMP, that is energically less costly than de novo synthesis. This chain is Adenine phosphoribosyltransferase, found in Thermotoga neapolitana (strain ATCC 49049 / DSM 4359 / NBRC 107923 / NS-E).